The sequence spans 1263 residues: DNA-directed RNA polymerase subunit beta (1263 aa).

The protein belongs to the RNA polymerase beta chain family. As to quaternary structure, the RNAP catalytic core consists of 2 alpha, 1 beta, 1 beta' and 1 omega subunit. When a sigma factor is associated with the core the holoenzyme is formed, which can initiate transcription.

The catalysed reaction is RNA(n) + a ribonucleoside 5'-triphosphate = RNA(n+1) + diphosphate. Functionally, DNA-dependent RNA polymerase catalyzes the transcription of DNA into RNA using the four ribonucleoside triphosphates as substrates. The polypeptide is DNA-directed RNA polymerase subunit beta (Thermotoga petrophila (strain ATCC BAA-488 / DSM 13995 / JCM 10881 / RKU-1)).